A 288-amino-acid chain; its full sequence is MEISRLAQSKRNIISLNMDLERDTQRIDEANQKLLLKIQEREDKIQRLESEIIQTRGLVEDEEWEKENRTTMERERALQELEEETARLERKNKTLVHSITELQQKLTRKSQKITNCEQSSPDGALEETKVKLQQLEASYACQEKELLKVMKEYAFVTQLCEDQALYIKKYQETLKKIEEELEALFLEREVSKLVSMNPVEKEHTSQNNEGTPTQKTARLFSKKIFCCLFFITLFFIRLLSYMFFHVRFINPDLLVNVLPKVLGRSTLWKLRCFFFPSLTLETEDMLPH.

Residues 10 to 192 (KRNIISLNMD…ALFLEREVSK (183 aa)) are a coiled coil. Residues 224 to 244 (IFCCLFFITLFFIRLLSYMFF) form a helical membrane-spanning segment.

It belongs to the TMCO5 family.

Its subcellular location is the endoplasmic reticulum membrane. It localises to the nucleus membrane. The chain is Transmembrane and coiled-coil domain-containing protein 5A (TMCO5A) from Homo sapiens (Human).